Reading from the N-terminus, the 291-residue chain is Bifunctional protein FolD 1 (291 aa).

Residues 167-169 (GAS), Ile192, and Ile233 contribute to the NADP(+) site.

This sequence belongs to the tetrahydrofolate dehydrogenase/cyclohydrolase family. Homodimer.

It carries out the reaction (6R)-5,10-methylene-5,6,7,8-tetrahydrofolate + NADP(+) = (6R)-5,10-methenyltetrahydrofolate + NADPH. The catalysed reaction is (6R)-5,10-methenyltetrahydrofolate + H2O = (6R)-10-formyltetrahydrofolate + H(+). The protein operates within one-carbon metabolism; tetrahydrofolate interconversion. Functionally, catalyzes the oxidation of 5,10-methylenetetrahydrofolate to 5,10-methenyltetrahydrofolate and then the hydrolysis of 5,10-methenyltetrahydrofolate to 10-formyltetrahydrofolate. In Pseudomonas putida (strain ATCC 47054 / DSM 6125 / CFBP 8728 / NCIMB 11950 / KT2440), this protein is Bifunctional protein FolD 1.